A 539-amino-acid chain; its full sequence is MPENVASRSGPPAAGPGNRGKGAYQDRDKPAQIRFSNISAAKAVADAIRTSLGPKGMDKMIQDGKGDVTITNDGATILKQMQVLHPAARMLVELSKAQDIEAGDGTTSVVIIAGSLLDSCTKLLQKGIHPTIISESFQKALEKGLEILTDMSRPVQLSDRETLLNSATTSLNSKVVSQYSSLLSPMSVNAVMKVIDPATATSVDLRDIKIVKKLGGTIDDCELVEGLVLTQKVANSGITRVEKAKIGLIQFCLSAPKTDMDNQIVVSDYAQMDRVLREERAYILNLVKQIKKTGCNVLLIQKSILRDALSDLALHFLNKMKIMVVKDIEREDIEFICKTIGTKPVAHIDQFTPDMLGSAELAEEVSLNGSGKLFKITGCTSPGKTVTIVVRGSNKLVIEEAERSIHDALCVIRCLVKKRALIAGGGAPEIELALRLTEYSRTLSGMESYCVRAFADAMEVIPSTLAENAGLNPISTVTELRNRHAQGEKTTGINVRKGGISNILEEMVVQPLLVSVSALTLATETVRSILKIDDVVNTR.

A disordered region spans residues 1-28 (MPENVASRSGPPAAGPGNRGKGAYQDRD). The residue at position 19 (Arg-19) is an Omega-N-methylarginine. An N6-acetyllysine modification is found at Lys-21. A Phosphoserine modification is found at Ser-36. Gly-53 is an ADP binding site. Gly-53 serves as a coordination point for ATP. A Mg(2+)-binding site is contributed by Asp-104. The ADP site is built by Gly-105, Thr-106, Thr-107, Ser-108, Asn-172, Ser-173, and Lys-174. ATP contacts are provided by Gly-105 and Thr-106. ATP is bound at residue Lys-174. Ser-184 and Ser-202 each carry phosphoserine. Lys-288, Lys-302, Lys-319, and Lys-326 each carry N6-acetyllysine. ADP is bound at residue Gly-425. Residue Ser-444 is modified to Phosphoserine. Gln-510 is an ADP binding site.

Belongs to the TCP-1 chaperonin family. Component of the chaperonin-containing T-complex (TRiC), a hexadecamer composed of two identical back-to-back stacked rings enclosing a protein folding chamber. Each ring is made up of eight different subunits: TCP1/CCT1, CCT2, CCT3, CCT4, CCT5, CCT6A/CCT6, CCT7, CCT8. Interacts with PACRG. Interacts with DNAAF4. Interacts with DLEC1.

The protein resides in the cytoplasm. The protein localises to the melanosome. It localises to the cytoskeleton. It is found in the microtubule organizing center. Its subcellular location is the centrosome. The protein resides in the cilium basal body. The enzyme catalyses ATP + H2O = ADP + phosphate + H(+). Its function is as follows. Component of the chaperonin-containing T-complex (TRiC), a molecular chaperone complex that assists the folding of actin, tubulin and other proteins upon ATP hydrolysis. The TRiC complex mediates the folding of WRAP53/TCAB1, thereby regulating telomere maintenance. As part of the TRiC complex may play a role in the assembly of BBSome, a complex involved in ciliogenesis regulating transports vesicles to the cilia. In Rattus norvegicus (Rat), this protein is T-complex protein 1 subunit delta (Cct4).